A 589-amino-acid chain; its full sequence is Capsid scaffolding protein (589 aa).

Residues H47, S118, and H142 each act as charge relay system in the active site. Residues E264–Q273 are compositionally biased toward basic and acidic residues. A disordered region spans residues E264–H283. Residues H307–P326 are interaction with pAP. 2 disordered regions span residues R421–Y478 and A514–G552. 2 short sequence motifs (nuclear localization signal) span residues K428–R433 and K453–K459. The span at K453 to H462 shows a compositional bias: basic residues. Residues A514 to S543 are compositionally biased toward low complexity. The interaction with major capsid protein stretch occupies residues P569 to E589.

This sequence belongs to the herpesviridae capsid scaffolding protein family. In terms of assembly, homomultimer. Interacts with major capsid protein. Exists in a monomer-dimer equilibrium with the dimer being the active species. In terms of processing, capsid scaffolding protein is cleaved by assemblin after formation of the spherical procapsid. As a result, the capsid obtains its mature, icosahedral shape. Cleavages occur at two or more sites: release (R-site) and maturation (M-site).

The protein resides in the host cytoplasm. The protein localises to the host nucleus. The enzyme catalyses Cleaves -Ala-|-Ser- and -Ala-|-Ala- bonds in the scaffold protein.. Functionally, acts as a scaffold protein by binding major capsid protein in the cytoplasm, inducing the nuclear localization of both proteins. Multimerizes in the nucleus such as major capsid protein forms the icosahedral T=16 capsid. Autocatalytic cleavage releases the assembly protein, and subsequently abolishes interaction with major capsid protein. Cleavages products are evicted from the capsid before or during DNA packaging. Protease that plays an essential role in virion assembly within the nucleus. Catalyzes the cleavage of the assembly protein after formation of the spherical procapsid. By that cleavage, the capsid matures and gains its icosahedral shape. The cleavage sites seem to include -Ala-Ser-, -Ala-Ala-, as well as Ala-Thr bonds. Assemblin and cleavages products are evicted from the capsid before or during DNA packaging. In terms of biological role, plays a major role in capsid assembly. Acts as a scaffold protein by binding major capsid protein. Multimerizes in the nucleus such as major capsid protein forms the icosahedral T=16 capsid. Cleaved by assemblin after capsid completion. The cleavages products are evicted from the capsid before or during DNA packaging. The sequence is that of Capsid scaffolding protein (UL80) from Simian cytomegalovirus (strain Colburn).